Consider the following 97-residue polypeptide: Conotoxin Cal6.1b (97 aa).

Residues 1 to 22 form the signal peptide; it reads MKLTTVLVVALLVLAACQFTVT. The segment at 22–46 is disordered; that stretch reads TDNSGDDPENPSLRSAGENQNPDST. A propeptide spanning residues 23-68 is cleaved from the precursor; the sequence is DNSGDDPENPSLRSAGENQNPDSTKTITAWATRDMTNMRRGLNRPS. 3 cysteine pairs are disulfide-bonded: Cys71–Cys87, Cys78–Cys91, and Cys86–Cys96.

It belongs to the conotoxin O1 superfamily. As to expression, expressed by the venom duct.

It is found in the secreted. Its function is as follows. Probable neurotoxin with unknown target. Possibly targets ion channels. The protein is Conotoxin Cal6.1b of Californiconus californicus (California cone).